Consider the following 108-residue polypeptide: Thioredoxin Asp f 28 (108 aa).

The Thioredoxin domain maps to 1–108 (MSHGKVIAVD…LEEMIKSISA (108 aa)). Active-site nucleophile residues include Cys-33 and Cys-36. An intrachain disulfide couples Cys-33 to Cys-36.

It belongs to the thioredoxin family.

Functionally, participates in various redox reactions through the reversible oxidation of its active center dithiol to a disulfide and catalyzes dithiol-disulfide exchange reactions. The chain is Thioredoxin Asp f 28 from Aspergillus fumigatus (Neosartorya fumigata).